Consider the following 61-residue polypeptide: Small ribosomal subunit protein uS14 (61 aa).

Zn(2+) contacts are provided by C24, C27, C40, and C43.

Belongs to the universal ribosomal protein uS14 family. Zinc-binding uS14 subfamily. In terms of assembly, part of the 30S ribosomal subunit. Contacts proteins S3 and S10. Requires Zn(2+) as cofactor.

Its function is as follows. Binds 16S rRNA, required for the assembly of 30S particles and may also be responsible for determining the conformation of the 16S rRNA at the A site. The protein is Small ribosomal subunit protein uS14 of Thermotoga neapolitana (strain ATCC 49049 / DSM 4359 / NBRC 107923 / NS-E).